The primary structure comprises 346 residues: tRNA N6-adenosine threonylcarbamoyltransferase (346 aa).

Residues His111 and His115 each contribute to the Fe cation site. Substrate-binding positions include 134 to 138 (LVSGG), Asp167, Gly180, Asp184, and Asn279. Asp307 contributes to the Fe cation binding site.

The protein belongs to the KAE1 / TsaD family. Fe(2+) is required as a cofactor.

The protein localises to the cytoplasm. The catalysed reaction is L-threonylcarbamoyladenylate + adenosine(37) in tRNA = N(6)-L-threonylcarbamoyladenosine(37) in tRNA + AMP + H(+). Its function is as follows. Required for the formation of a threonylcarbamoyl group on adenosine at position 37 (t(6)A37) in tRNAs that read codons beginning with adenine. Is involved in the transfer of the threonylcarbamoyl moiety of threonylcarbamoyl-AMP (TC-AMP) to the N6 group of A37, together with TsaE and TsaB. TsaD likely plays a direct catalytic role in this reaction. In Trichormus variabilis (strain ATCC 29413 / PCC 7937) (Anabaena variabilis), this protein is tRNA N6-adenosine threonylcarbamoyltransferase.